Here is a 367-residue protein sequence, read N- to C-terminus: Heme A synthase (367 aa).

Transmembrane regions (helical) follow at residues 25-45, 111-131, 139-159, 174-194, 210-230, 272-292, 305-325, and 327-347; these read ALRLWLGFVLLALFCLVLVGG, LIARGIGVIFALPLLYFWLTG, WPLVGILALGALQGFIGWWMV, LATHLVMACLIFAGCMWIMRG, GLAAAIAVFALFQIYLGALVA, FIHRIGAYTLFALVLINMVIA, AVLLFALVTVQAAIGVATLLM, and VPLHWGLLHQAGALVVFGFAV. His-274 provides a ligand contact to heme. His-335 is a binding site for heme.

The protein belongs to the COX15/CtaA family. Type 2 subfamily. As to quaternary structure, interacts with CtaB. The cofactor is heme b.

The protein localises to the cell membrane. The catalysed reaction is Fe(II)-heme o + 2 A + H2O = Fe(II)-heme a + 2 AH2. It functions in the pathway porphyrin-containing compound metabolism; heme A biosynthesis; heme A from heme O: step 1/1. Its function is as follows. Catalyzes the conversion of heme O to heme A by two successive hydroxylations of the methyl group at C8. The first hydroxylation forms heme I, the second hydroxylation results in an unstable dihydroxymethyl group, which spontaneously dehydrates, resulting in the formyl group of heme A. This chain is Heme A synthase, found in Rhizobium etli (strain ATCC 51251 / DSM 11541 / JCM 21823 / NBRC 15573 / CFN 42).